An 81-amino-acid polypeptide reads, in one-letter code: Large ribosomal subunit protein bL31B (81 aa).

This sequence belongs to the bacterial ribosomal protein bL31 family. Type B subfamily. In terms of assembly, part of the 50S ribosomal subunit.

The polypeptide is Large ribosomal subunit protein bL31B (Borreliella burgdorferi (strain ATCC 35210 / DSM 4680 / CIP 102532 / B31) (Borrelia burgdorferi)).